A 134-amino-acid polypeptide reads, in one-letter code: Large-conductance mechanosensitive channel (134 aa).

Helical transmembrane passes span 16-36 (VVDMAVGIIIGVAFGKIVSSF) and 76-96 (GVFLQAIFDFIIIAFAIFIAV).

Belongs to the MscL family. In terms of assembly, homopentamer.

Its subcellular location is the cell inner membrane. Channel that opens in response to stretch forces in the membrane lipid bilayer. May participate in the regulation of osmotic pressure changes within the cell. This is Large-conductance mechanosensitive channel from Thioalkalivibrio sulfidiphilus (strain HL-EbGR7).